Reading from the N-terminus, the 534-residue chain is Serine/threonine-protein kinase 35 (534 aa).

The segment at 32–176 (VESHGSLGAQ…AAAARAMDPV (145 aa)) is disordered. Low complexity-rich tracts occupy residues 39-65 (GAQA…TSRA) and 166-176 (PAAAARAMDPV). The Protein kinase domain maps to 202–530 (YSLLAEIGRG…FELETRMDQV (329 aa)). ATP is bound by residues 208 to 216 (IGRGSYGVV) and K231. D360 functions as the Proton acceptor in the catalytic mechanism.

Belongs to the protein kinase superfamily. Ser/Thr protein kinase family. In terms of assembly, interacts with PDLIM1/CLP-36. Post-translationally, autophosphorylated. In terms of tissue distribution, expressed in testis.

Its subcellular location is the nucleus. It localises to the nucleolus. It is found in the cytoplasm. It carries out the reaction L-seryl-[protein] + ATP = O-phospho-L-seryl-[protein] + ADP + H(+). The catalysed reaction is L-threonyl-[protein] + ATP = O-phospho-L-threonyl-[protein] + ADP + H(+). In Homo sapiens (Human), this protein is Serine/threonine-protein kinase 35 (STK35).